Here is a 714-residue protein sequence, read N- to C-terminus: Elongation factor G-like protein (714 aa).

The tr-type G domain occupies 21–289 (GGVRNVVLVG…VATRGFPSPM (269 aa)). A G1 region spans residues 30-37 (GPSGGGKT). 30–37 (GPSGGGKT) lines the GTP pocket. Residues 73–77 (QRSVG) form a G2 region. The interval 94 to 97 (DTPG) is G3. Residues 94–98 (DTPGY) and 148–151 (TKLD) contribute to the GTP site. The G4 stretch occupies residues 148–151 (TKLD). The segment at 267–269 (CSS) is G5.

It belongs to the TRAFAC class translation factor GTPase superfamily. Classic translation factor GTPase family. EF-G/EF-2 subfamily.

The protein is Elongation factor G-like protein of Mycobacterium tuberculosis (strain ATCC 25618 / H37Rv).